A 238-amino-acid chain; its full sequence is ATP synthase subunit a (238 aa).

5 consecutive transmembrane segments (helical) span residues 16-36 (LIWL…TVLF), 79-99 (GLFM…FFPV), 103-123 (FVFG…SSLL), 129-149 (GLMS…MVVV), and 209-229 (VFGA…CVLL).

This sequence belongs to the ATPase A chain family. In terms of assembly, F-type ATPases have 2 components, CF(1) - the catalytic core - and CF(0) - the membrane proton channel. CF(1) has five subunits: alpha(3), beta(3), gamma(1), delta(1), epsilon(1). CF(0) has three main subunits: a, b and c.

Its subcellular location is the mitochondrion inner membrane. In terms of biological role, mitochondrial membrane ATP synthase (F(1)F(0) ATP synthase or Complex V) produces ATP from ADP in the presence of a proton gradient across the membrane which is generated by electron transport complexes of the respiratory chain. F-type ATPases consist of two structural domains, F(1) - containing the extramembraneous catalytic core and F(0) - containing the membrane proton channel, linked together by a central stalk and a peripheral stalk. During catalysis, ATP synthesis in the catalytic domain of F(1) is coupled via a rotary mechanism of the central stalk subunits to proton translocation. Key component of the proton channel; it may play a direct role in the translocation of protons across the membrane. The polypeptide is ATP synthase subunit a (ATP6) (Mytilus edulis (Blue mussel)).